The following is a 185-amino-acid chain: Peptidyl-tRNA hydrolase (185 aa).

Phe-14 contributes to the tRNA binding site. The active-site Proton acceptor is His-19. TRNA is bound by residues Tyr-64, Asn-66, and Asn-112.

The protein belongs to the PTH family. Monomer.

The protein resides in the cytoplasm. It catalyses the reaction an N-acyl-L-alpha-aminoacyl-tRNA + H2O = an N-acyl-L-amino acid + a tRNA + H(+). Functionally, hydrolyzes ribosome-free peptidyl-tRNAs (with 1 or more amino acids incorporated), which drop off the ribosome during protein synthesis, or as a result of ribosome stalling. Its function is as follows. Catalyzes the release of premature peptidyl moieties from peptidyl-tRNA molecules trapped in stalled 50S ribosomal subunits, and thus maintains levels of free tRNAs and 50S ribosomes. The sequence is that of Peptidyl-tRNA hydrolase from Exiguobacterium sp. (strain ATCC BAA-1283 / AT1b).